A 126-amino-acid chain; its full sequence is Protein ApaG (126 aa).

The ApaG domain occupies 2–126; sequence NQRLSPIKVE…FSLAVPGLLH (125 aa).

This Shewanella piezotolerans (strain WP3 / JCM 13877) protein is Protein ApaG.